Here is a 551-residue protein sequence, read N- to C-terminus: HTH-type transcriptional regulator SgrR (551 aa).

An HTH marR-type domain is found at 1 to 116 (MPSARLQQQF…LVSHLGRSFR (116 aa)). The H-T-H motif DNA-binding region spans 26-49 (LNELAALLSCSRRHMRTLLNTMQD). The segment at 163–492 (ELEADIAHHW…IDWQADAARW (330 aa)) is solute-binding.

Functionally, activates the small RNA gene sgrS under glucose-phosphate stress conditions as well as yfdZ. Represses its own transcription under both stress and non-stress conditions. Might act as a sensor of the intracellular accumulation of phosphoglucose by binding these molecules in its C-terminal solute-binding domain. This is HTH-type transcriptional regulator SgrR from Escherichia coli O1:K1 / APEC.